An 83-amino-acid polypeptide reads, in one-letter code: Cytochrome b559 subunit alpha (83 aa).

Residues V21–W35 traverse the membrane as a helical segment. H23 serves as a coordination point for heme.

This sequence belongs to the PsbE/PsbF family. Heterodimer of an alpha subunit and a beta subunit. PSII is composed of 1 copy each of membrane proteins PsbA, PsbB, PsbC, PsbD, PsbE, PsbF, PsbH, PsbI, PsbJ, PsbK, PsbL, PsbM, PsbT, PsbX, PsbY, PsbZ, Psb30/Ycf12, at least 3 peripheral proteins of the oxygen-evolving complex and a large number of cofactors. It forms dimeric complexes. Heme b is required as a cofactor.

The protein resides in the plastid. Its subcellular location is the chloroplast thylakoid membrane. Its function is as follows. This b-type cytochrome is tightly associated with the reaction center of photosystem II (PSII). PSII is a light-driven water:plastoquinone oxidoreductase that uses light energy to abstract electrons from H(2)O, generating O(2) and a proton gradient subsequently used for ATP formation. It consists of a core antenna complex that captures photons, and an electron transfer chain that converts photonic excitation into a charge separation. The sequence is that of Cytochrome b559 subunit alpha from Pinus koraiensis (Korean pine).